The following is a 301-amino-acid chain: Protein FdhE homolog (301 aa).

This sequence belongs to the FdhE family.

Its subcellular location is the cytoplasm. Functionally, necessary for formate dehydrogenase activity. In Erwinia tasmaniensis (strain DSM 17950 / CFBP 7177 / CIP 109463 / NCPPB 4357 / Et1/99), this protein is Protein FdhE homolog.